Consider the following 529-residue polypeptide: Peptide chain release factor 3 (529 aa).

In terms of domain architecture, tr-type G spans 11–280; sequence AKRRTFAIIS…GLVEWAPAPM (270 aa). GTP contacts are provided by residues 20–27, 88–92, and 142–145; these read SHPDAGKT, DTPGH, and NKLD.

This sequence belongs to the TRAFAC class translation factor GTPase superfamily. Classic translation factor GTPase family. PrfC subfamily.

It localises to the cytoplasm. Increases the formation of ribosomal termination complexes and stimulates activities of RF-1 and RF-2. It binds guanine nucleotides and has strong preference for UGA stop codons. It may interact directly with the ribosome. The stimulation of RF-1 and RF-2 is significantly reduced by GTP and GDP, but not by GMP. This chain is Peptide chain release factor 3, found in Klebsiella pneumoniae subsp. pneumoniae (strain ATCC 700721 / MGH 78578).